The sequence spans 444 residues: uncharacterized protein (444 aa).

14 helical membrane-spanning segments follow: residues 9 to 29, 42 to 62, 82 to 102, 104 to 126, 136 to 156, 164 to 184, 193 to 213, 217 to 237, 263 to 283, 295 to 315, 324 to 344, 347 to 367, 387 to 407, and 411 to 431; these read LIVS…MIAV, IASI…TQPI, LFLI…LIVF, ALQA…HVVS, FFGL…SILI, IFWV…TMFP, APLD…IILL, EAPW…PLFF, LSVL…PLFM, GMAL…GAQL, IIFL…LLSS, SVLF…VGLT, GIFS…IGLI, and HTLF…SLGI.

This sequence belongs to the major facilitator superfamily. TCR/Tet family.

Its subcellular location is the cell membrane. This is an uncharacterized protein from Bacillus subtilis (strain 168).